Here is a 911-residue protein sequence, read N- to C-terminus: Leucine--tRNA ligase (911 aa).

Positions 42–52 match the 'HIGH' region motif; the sequence is PYPSGKLHMGH. The 'KMSKS' region signature appears at 659–663; sequence TMSKS. ATP is bound at residue Lys-662.

It belongs to the class-I aminoacyl-tRNA synthetase family.

The protein localises to the cytoplasm. The catalysed reaction is tRNA(Leu) + L-leucine + ATP = L-leucyl-tRNA(Leu) + AMP + diphosphate. This is Leucine--tRNA ligase from Delftia acidovorans (strain DSM 14801 / SPH-1).